The chain runs to 61 residues: Double gene block protein 2 (61 aa).

Topologically, residues 1–12 are cytoplasmic; sequence MACCRCDSSPGD. Residues 13-33 form a helical; Signal-anchor for type II membrane protein membrane-spanning segment; sequence YSGALLILFISFVFFYITSLS. The Lumenal portion of the chain corresponds to 34-61; sequence PQGNTYVHHFDSSSVKTQYVGISTNGDG.

The protein belongs to the gammacarmovirus double gene block protein 2 family.

The protein resides in the host endoplasmic reticulum membrane. In terms of biological role, cell-to-cell movement function. The chain is Double gene block protein 2 from Melon necrotic spot virus (MNSV).